Consider the following 993-residue polypeptide: UPF0182 protein MAV_4137 (993 aa).

7 consecutive transmembrane segments (helical) span residues 18-38 (ILILIALGVIALLLAGPRLID), 63-83 (FVVFLIAGLLVGGIVFAGLAV), 113-133 (LVSIGVPVAIGLLAGIIAQSY), 175-195 (FVAVFLAFVANLLAHYIFGGI), 210-230 (IQLVTLVGLLVLLKAVAYWLD), 254-274 (AVLPAKLILMAIALICAAAVF), and 287-307 (IGLVLLLLSSLIVGAGWPLIV). Positions 903–941 (NIQPTEGGAPAASPPANAPAPAVTPGSAPPVAAPPVPDG) are disordered. Pro residues predominate over residues 929–939 (SAPPVAAPPVP).

The protein belongs to the UPF0182 family.

Its subcellular location is the cell membrane. The sequence is that of UPF0182 protein MAV_4137 from Mycobacterium avium (strain 104).